A 141-amino-acid polypeptide reads, in one-letter code: Large ribosomal subunit protein uL14m (141 aa).

The N-terminal 19 residues, 1–19 (MALSLSGLILPKLMQQRAF), are a transit peptide targeting the mitochondrion.

It belongs to the universal ribosomal protein uL14 family. Component of the mitochondrial ribosome large subunit (39S) which comprises a 16S rRNA and about 50 distinct proteins. Interacts with MALSU1.

The protein localises to the mitochondrion. Functionally, may form part of 2 intersubunit bridges in the assembled ribosome. Upon binding to MALSU1, intersubunit bridge formation is blocked, preventing ribosome formation and repressing translation. The sequence is that of Large ribosomal subunit protein uL14m (mrpl14) from Danio rerio (Zebrafish).